A 51-amino-acid polypeptide reads, in one-letter code: Large ribosomal subunit protein bL33 (51 aa).

The protein belongs to the bacterial ribosomal protein bL33 family.

The sequence is that of Large ribosomal subunit protein bL33 from Acidithiobacillus ferrooxidans (strain ATCC 53993 / BNL-5-31) (Leptospirillum ferrooxidans (ATCC 53993)).